Here is a 232-residue protein sequence, read N- to C-terminus: Fibrillarin-like rRNA/tRNA 2'-O-methyltransferase (232 aa).

Residues 87 to 88 (TT), 105 to 106 (EF), 130 to 131 (DA), and 150 to 153 (DVAQ) each bind S-adenosyl-L-methionine.

This sequence belongs to the methyltransferase superfamily. Fibrillarin family. In terms of assembly, interacts with nop5. Component of box C/D small ribonucleoprotein (sRNP) particles that contain rpl7ae, FlpA and nop5, plus a guide RNA.

Involved in pre-rRNA and tRNA processing. Utilizes the methyl donor S-adenosyl-L-methionine to catalyze the site-specific 2'-hydroxyl methylation of ribose moieties in rRNA and tRNA. Site specificity is provided by a guide RNA that base pairs with the substrate. Methylation occurs at a characteristic distance from the sequence involved in base pairing with the guide RNA. The sequence is that of Fibrillarin-like rRNA/tRNA 2'-O-methyltransferase from Methanococcus maripaludis (strain C7 / ATCC BAA-1331).